Reading from the N-terminus, the 101-residue chain is MSRRCELTGIGPMVGHNVSHSNIKTKRRFLPALSPASLQSDSLGQTFKLRISNAALRTLDFRGGLDVFLLGAKDEQLSPRALKIKAQVKAKAKAAATAVAA.

Belongs to the bacterial ribosomal protein bL28 family.

The chain is Large ribosomal subunit protein bL28 from Caulobacter sp. (strain K31).